Reading from the N-terminus, the 750-residue chain is uncharacterized protein (750 aa).

This is an uncharacterized protein from Escherichia coli (strain K12).